The chain runs to 953 residues: Nucleotide-binding oligomerization domain-containing protein 1 (953 aa).

A CARD domain is found at 15-107 (GCHSHIKLLK…VDLRLWLSEI (93 aa)). The region spanning 196 to 531 (ETVFVFGDAG…AFFTAFFLVA (336 aa)) is the NACHT domain. 202-209 (GDAGVGKS) is a binding site for ATP. S-palmitoyl cysteine attachment occurs at residues cysteine 558 and cysteine 567. LRR repeat units follow at residues 702–725 (FHRQ…ELQP), 727–750 (FSRL…VLCE), 755–778 (YKIV…YVAQ), 783–806 (CRGL…CVAL), 839–862 (HPSL…SLAQ), 867–890 (NTTL…CFAE), 895–918 (NQTL…QLAR), and 923–946 (NTAI…VFEN). The S-palmitoyl cysteine moiety is linked to residue cysteine 952.

Belongs to the NOD1-NOD2 family. Homooligomer: homooligomerizes following ligand-binding, promoting RIPK2 recruitment. Interacts (via CARD domain) with RIPK2 (via CARD domain). Following RIPK2 recruitment, RIPK2 homooligomerizes via its CARD domain and forms long filaments named RIPosomes. Interacts (via CARD domain) with ubiquitin; inhibiting interaction with RIPK2. Interacts with ARHGEF2. Interacts with NLRP10 and recruits it to the cell membrane following invasive bacterial infection. Interacts with IFIH1; this interaction promotes transcription of antiviral genes and inhibition of viral replication. Interacts with Irgm1; promoting NOD1 degradation. Interacts with ATG16L1. Post-translationally, ubiquitinated. 'Lys-48'-linked polyubiquitination by RNF34 promotes proteasomal degradation and thereby negatively regulates NOD1 for instance in NF-kappa-B activation. Palmitoylated. Palmitoylation is required for proper recruitment to the bacterial entry site and hence for proper signaling upon cognate peptidoglycan detection. In terms of processing, degraded via selective autophagy following interaction with Irgm1. Irgm1 promotes NOD1-RIPK2 RIPosome recruitment to autophagosome membranes, promoting their SQSTM1/p62-dependent autophagic degradation. As to expression, although ubiquitously expressed, NOD1 levels are more abundant in immune cells, the gastrointestinal tract, and adipose tissue.

It is found in the cell membrane. The protein localises to the apical cell membrane. It localises to the basolateral cell membrane. Its subcellular location is the cytoplasm. In terms of biological role, pattern recognition receptor (PRR) that detects bacterial peptidoglycan fragments and other danger signals and thus participates in both innate and adaptive immune responses. Specifically recognizes and binds gamma-D-glutamyl-meso-diaminopimelic acid (iE-DAP), a dipeptide present in peptidoglycan of Gram-negative bacteria. Preferentially binds iE-DAP in tetrapeptide-containing muropeptides (MurNAc-TetraDAP or TetraDAP). Ligand binding triggers oligomerization that facilitates the binding and subsequent activation of the proximal adapter receptor-interacting RIPK2. Following recruitment, RIPK2 undergoes 'Met-1'- (linear) and 'Lys-63'-linked polyubiquitination by E3 ubiquitin-protein ligases XIAP, BIRC2, BIRC3 and the LUBAC complex, becoming a scaffolding protein for downstream effectors, triggering activation of the NF-kappa-B and MAP kinases signaling. This in turn leads to the transcriptional activation of hundreds of genes involved in immune response. Also acts as a regulator of antiviral response elicited by dsRNA and the expression of RLR pathway members by targeting IFIH1 and TRAF3 to modulate the formation of IFIH1-MAVS and TRAF3-MAVS complexes leading to increased transcription of type I IFNs. Also acts as a regulator of autophagy via its interaction with ATG16L1, possibly by recruiting ATG16L1 at the site of bacterial entry. Besides recognizing pathogens, also involved in the endoplasmic reticulum stress response: acts by sensing and binding to the cytosolic metabolite sphingosine-1-phosphate generated in response to endoplasmic reticulum stress, initiating an inflammation process that leads to activation of the NF-kappa-B and MAP kinases signaling. In addition, plays a role in insulin trafficking in beta cells in a cell-autonomous manner. Mechanistically, upon recognizing cognate ligands, NOD1 and RIPK2 localize to insulin vesicles where they recruit RAB1A to direct insulin trafficking through the cytoplasm. This Mus musculus (Mouse) protein is Nucleotide-binding oligomerization domain-containing protein 1.